The sequence spans 111 residues: Magnetosome protein MamF (111 aa).

Over 1–17 (MAETILIETKTAGGNCR) the chain is Cytoplasmic. A helical membrane pass occupies residues 18 to 38 (SYLMAGASYLGILCFVPLLMS). The Lumenal portion of the chain corresponds to 39-50 (RDDEYVYFHAKQ). The chain crosses the membrane as a helical span at residues 51-71 (GLVLWMWSILAMFALHLPGIG). A topological domain (cytoplasmic) is located at residue lysine 72. The helical transmembrane segment at 73 to 93 (WLFGFSSMGVLMLSVVGLVSV) threads the bilayer. Over 94-111 (ALRRTWRLPLISHVVALI) the chain is Lumenal.

The protein belongs to the magnetosome MamF/MmsF protein family. In terms of assembly, may form homooligomers. Post-translationally, subject to cleavage or degradation; identified by N-terminal sequencing of proteins that are about 103, 92 and 15 kDa in size.

The protein localises to the magnetosome membrane. Functionally, plays a role in regulating magnetite crystal size; partially redundant function with MmsF. In Magnetospirillum gryphiswaldense (strain DSM 6361 / JCM 21280 / NBRC 15271 / MSR-1), this protein is Magnetosome protein MamF.